Reading from the N-terminus, the 165-residue chain is Putative 4-hydroxy-4-methyl-2-oxoglutarate aldolase (165 aa).

Substrate contacts are provided by residues 80 to 83 (GGNL) and R102. Position 103 (D103) interacts with a divalent metal cation.

It belongs to the class II aldolase/RraA-like family. As to quaternary structure, homotrimer. It depends on a divalent metal cation as a cofactor.

The catalysed reaction is 4-hydroxy-4-methyl-2-oxoglutarate = 2 pyruvate. It carries out the reaction oxaloacetate + H(+) = pyruvate + CO2. In terms of biological role, catalyzes the aldol cleavage of 4-hydroxy-4-methyl-2-oxoglutarate (HMG) into 2 molecules of pyruvate. Also contains a secondary oxaloacetate (OAA) decarboxylase activity due to the common pyruvate enolate transition state formed following C-C bond cleavage in the retro-aldol and decarboxylation reactions. In Cupriavidus taiwanensis (strain DSM 17343 / BCRC 17206 / CCUG 44338 / CIP 107171 / LMG 19424 / R1) (Ralstonia taiwanensis (strain LMG 19424)), this protein is Putative 4-hydroxy-4-methyl-2-oxoglutarate aldolase.